Reading from the N-terminus, the 769-residue chain is Serine protease HtrA-like (769 aa).

A compositionally biased stretch (basic residues) spans 1–20 (MDIGKKHVIPKSQYRRKRRE). The tract at residues 1–390 (MDIGKKHVIP…ATSKLNKGRA (390 aa)) is disordered. Basic and acidic residues-rich tracts occupy residues 21-64 (FFHN…ERFK) and 71-108 (LEQR…DVSK). Residues 126 to 137 (YEQNSEATLSTK) are compositionally biased toward polar residues. Positions 138-186 (STDKVESTEMRKLSSDKNKVGHEEQHVLSKPSEHDKETRIDSESSRTDS) are enriched in basic and acidic residues. Positions 247–262 (QQSQNEQTKTYTYGDS) are enriched in polar residues. Basic and acidic residues-rich tracts occupy residues 264–296 (QNDK…HIVD) and 310–330 (KTDD…HKQN). Polar residues predominate over residues 331 to 347 (ADSSETVGYQSQSTASH). Positions 348–364 (RSTEKRNISINDHDKLN) are enriched in basic and acidic residues. Residues 365-390 (GQKTNTKTSANNNQKKATSKLNKGRA) show a composition bias toward polar residues. A helical membrane pass occupies residues 410–430 (LVILMGIIILIVILNAIFNNV). Residues H504, D534, and S619 each act as charge relay system in the active site. The 54-residue stretch at 680 to 733 (IASLNSFERQAVKLPGKVKNGVVVDQVDNNGLADQSGLKKGDVITELDGKLLED) folds into the PDZ domain.

Belongs to the peptidase S1C family.

The protein resides in the cell membrane. The sequence is that of Serine protease HtrA-like from Staphylococcus aureus (strain USA300).